An 80-amino-acid polypeptide reads, in one-letter code: RNA-binding protein Hfq (80 aa).

Residues D9–V69 enclose the Sm domain.

It belongs to the Hfq family. As to quaternary structure, homohexamer.

RNA chaperone that binds small regulatory RNA (sRNAs) and mRNAs to facilitate mRNA translational regulation in response to envelope stress, environmental stress and changes in metabolite concentrations. Also binds with high specificity to tRNAs. The sequence is that of RNA-binding protein Hfq from Alkaliphilus oremlandii (strain OhILAs) (Clostridium oremlandii (strain OhILAs)).